The primary structure comprises 60 residues: Large ribosomal subunit protein uL30 (60 aa).

This sequence belongs to the universal ribosomal protein uL30 family. As to quaternary structure, part of the 50S ribosomal subunit.

The sequence is that of Large ribosomal subunit protein uL30 from Bacillus mycoides (strain KBAB4) (Bacillus weihenstephanensis).